Reading from the N-terminus, the 128-residue chain is Ribosome-binding factor A (128 aa).

It belongs to the RbfA family. Monomer. Binds 30S ribosomal subunits, but not 50S ribosomal subunits or 70S ribosomes.

It is found in the cytoplasm. Functionally, one of several proteins that assist in the late maturation steps of the functional core of the 30S ribosomal subunit. Associates with free 30S ribosomal subunits (but not with 30S subunits that are part of 70S ribosomes or polysomes). Required for efficient processing of 16S rRNA. May interact with the 5'-terminal helix region of 16S rRNA. The polypeptide is Ribosome-binding factor A (Geobacillus thermodenitrificans (strain NG80-2)).